The sequence spans 315 residues: Thymidylate synthase (315 aa).

DUMP is bound by residues R22 and 177–178; that span reads RR. C197 serves as the catalytic Nucleophile. DUMP-binding positions include 217 to 220, N228, and 258 to 260; these read RSAD and HLY. Residue D220 coordinates (6R)-5,10-methylene-5,6,7,8-tetrahydrofolate. Position 314 (A314) interacts with (6R)-5,10-methylene-5,6,7,8-tetrahydrofolate.

It belongs to the thymidylate synthase family. Bacterial-type ThyA subfamily. Homodimer.

It localises to the cytoplasm. It catalyses the reaction dUMP + (6R)-5,10-methylene-5,6,7,8-tetrahydrofolate = 7,8-dihydrofolate + dTMP. It functions in the pathway pyrimidine metabolism; dTTP biosynthesis. Catalyzes the reductive methylation of 2'-deoxyuridine-5'-monophosphate (dUMP) to 2'-deoxythymidine-5'-monophosphate (dTMP) while utilizing 5,10-methylenetetrahydrofolate (mTHF) as the methyl donor and reductant in the reaction, yielding dihydrofolate (DHF) as a by-product. This enzymatic reaction provides an intracellular de novo source of dTMP, an essential precursor for DNA biosynthesis. The sequence is that of Thymidylate synthase from Enterococcus faecalis (strain ATCC 700802 / V583).